The sequence spans 181 residues: MDRLLASLDDAPIVDKDGYEYLVHPISNGVPMLDPALLREVVIEVMQTADLNVDKIVAPEAMGIHLATAVSLQTDIPLVVIRKREYGLEGEVSLHQETGYSESEMYINDVEPGDRVVIIDDMLSTGGTLASICTALDDIGADISDIVVVMRKVGPSALDDTEFDATSLIDITVEDGEVVVH.

The protein belongs to the purine/pyrimidine phosphoribosyltransferase family. Archaeal HPRT subfamily.

May catalyze a purine salvage reaction, the substrate is unknown. The polypeptide is HGPRTase-like protein 2 (Natrialba magadii (strain ATCC 43099 / DSM 3394 / CCM 3739 / CIP 104546 / IAM 13178 / JCM 8861 / NBRC 102185 / NCIMB 2190 / MS3) (Natronobacterium magadii)).